The sequence spans 1221 residues: DNA topoisomerase 2 (1221 aa).

Residues Asn65, Asn94, 122-124, 135-142, and 352-354 contribute to the ATP site; these read SSN, GRHGYGAK, and QNK. The Toprim domain maps to 432 to 546; it reads RTLIVTEGDS…SLLVRNPGFI (115 aa). The Mg(2+) site is built by Glu438, Asp515, and Asp517. In terms of domain architecture, Topo IIA-type catalytic spans 681–1097; sequence LAHSVDGLKP…TPVQLWLGEL (417 aa). The active-site O-(5'-phospho-DNA)-tyrosine intermediate is the Tyr771. An interaction with DNA region spans residues 952–961; that stretch reads GLTQRIHING. The segment at 1158–1198 is disordered; it reads VPPPTKRGAGGRSDGDGGATAAGAAAAVGGRGEKKGPGRAG. Gly residues predominate over residues 1165–1177; the sequence is GAGGRSDGDGGAT.

This sequence belongs to the type II topoisomerase family. As to quaternary structure, homodimer. Mg(2+) is required as a cofactor. The cofactor is Mn(2+). It depends on Ca(2+) as a cofactor.

Its subcellular location is the nucleus. The catalysed reaction is ATP-dependent breakage, passage and rejoining of double-stranded DNA.. Functionally, control of topological states of DNA by transient breakage and subsequent rejoining of DNA strands. Topoisomerase II makes double-strand breaks. In Trypanosoma brucei brucei, this protein is DNA topoisomerase 2 (TOP2).